The chain runs to 153 residues: Superoxide dismutase [Cu-Zn] (153 aa).

Asparagine 24 carries N-linked (GlcNAc...) asparagine glycosylation. The Cu cation site is built by histidine 47, histidine 49, and histidine 64. A disulfide bridge links cysteine 58 with cysteine 147. The Zn(2+) site is built by histidine 64, histidine 72, histidine 81, and aspartate 84. Residue histidine 121 participates in Cu cation binding. A compositionally biased stretch (basic and acidic residues) spans 126–137 (DLGRGGNEESKK). A disordered region spans residues 126–145 (DLGRGGNEESKKTGNAGPRP). Arginine 144 serves as a coordination point for substrate.

The protein belongs to the Cu-Zn superoxide dismutase family. As to quaternary structure, homodimer. Cu cation serves as cofactor. Zn(2+) is required as a cofactor.

It localises to the cytoplasm. The enzyme catalyses 2 superoxide + 2 H(+) = H2O2 + O2. Functionally, destroys radicals which are normally produced within the cells and which are toxic to biological systems. This is Superoxide dismutase [Cu-Zn] from Humicola lutea.